We begin with the raw amino-acid sequence, 361 residues long: MATAASNPYSILSSSSLVHADSAGMQQGSPFRNPQKLLQSDYLQGVPSNGHPLGHHWVTSLSDGGPWSSTLATSPLDQQDVKPGREDLQLGAIIHHRSPHVAHHSPHTNHPNAWGASPAPNSSITSSGQPLNVYSQPGFTVSGMLEHGGLTPPPAAASTQSLHPVLREPPDHGELGSHHCQDHSDEETPTSDELEQFAKQFKQRRIKLGFTQADVGLALGTLYGNVFSQTTICRFEALQLSFKNMCKLKPLLNKWLEEADSSTGSPTSIDKIAAQGRKRKKRTSIEVSVKGVLETHFLKCPKPAAQEISSLADSLQLEKEVVRVWFCNRRQKEKRMTPPGDQQPHEVYSHTVKTDASCHDL.

Disordered regions lie at residues 99 to 131 (PHVAHHSPHTNHPNAWGASPAPNSSITSSGQPL) and 144 to 192 (MLEH…PTSD). A compositionally biased stretch (polar residues) spans 119–131 (APNSSITSSGQPL). A compositionally biased stretch (basic and acidic residues) spans 165–183 (VLREPPDHGELGSHHCQDH). One can recognise a POU-specific domain in the interval 186–260 (EETPTSDELE…LLNKWLEEAD (75 aa)). Serine 265 is modified (phosphoserine). Residues 278-337 (KRKKRTSIEVSVKGVLETHFLKCPKPAAQEISSLADSLQLEKEVVRVWFCNRRQKEKRMT) constitute a DNA-binding region (homeobox). A disordered region spans residues 334-361 (KRMTPPGDQQPHEVYSHTVKTDASCHDL). A compositionally biased stretch (basic and acidic residues) spans 343-361 (QPHEVYSHTVKTDASCHDL).

It belongs to the POU transcription factor family. Class-3 subfamily. As to quaternary structure, interacts with HNRNPU. Brain specific.

The protein resides in the nucleus. Its function is as follows. Probable transcription factor which exert its primary action widely during early neural development and in a very limited set of neurons in the mature brain. In Mus musculus (Mouse), this protein is POU domain, class 3, transcription factor 4 (Pou3f4).